A 1147-amino-acid chain; its full sequence is GPI inositol-deacylase (1147 aa).

A disordered region spans residues 1–94 (MRRHSSGSSE…RTSPSSPLGL (94 aa)). N-linked (GlcNAc...) asparagine glycosylation occurs at asparagine 23. Residues 28 to 49 (SAKDSRSSAHPTTKLDHNRNAD) show a composition bias toward basic and acidic residues. Low complexity predominate over residues 50–63 (RPPSFSISRRSSSI). Asparagine 74 carries an N-linked (GlcNAc...) asparagine glycan. A helical membrane pass occupies residues 127–147 (AITFSALVAAIVGIGFLVAVL). The active site involves serine 310. Transmembrane regions (helical) follow at residues 795-815 (LYMR…ALVL) and 843-863 (IPLM…MAPA). 2 N-linked (GlcNAc...) asparagine glycosylation sites follow: asparagine 865 and asparagine 873. Helical transmembrane passes span 893–913 (PLFL…CTVF), 918–938 (LTLT…PGWI), and 965–985 (VLLL…VACL). Asparagine 1011 carries N-linked (GlcNAc...) asparagine glycosylation. The next 3 helical transmembrane spans lie at 1015-1035 (SIFI…VVWV), 1052-1072 (VLSV…KMIP), and 1084-1104 (LLLF…AYTL).

This sequence belongs to the GPI inositol-deacylase family.

The protein resides in the endoplasmic reticulum membrane. Involved in inositol deacylation of GPI-anchored proteins which plays important roles in the quality control and ER-associated degradation of GPI-anchored proteins. The protein is GPI inositol-deacylase (BST1) of Chaetomium globosum (strain ATCC 6205 / CBS 148.51 / DSM 1962 / NBRC 6347 / NRRL 1970) (Soil fungus).